The primary structure comprises 120 residues: Cytochrome c2 iso-1 (120 aa).

Position 1 is a pyrrolidone carboxylic acid (Q1). Heme c contacts are provided by C15, C18, H19, and M98.

It belongs to the cytochrome c family. Binds 1 heme c group covalently per subunit.

Cytochrome c2 is found mainly in purple, non-sulfur, photosynthetic bacteria where it functions as the electron donor to the oxidized bacteriochlorophyll in the photophosphorylation pathway. However, it may also have a role in the respiratory chain and is found in some non-photosynthetic bacteria. This chain is Cytochrome c2 iso-1, found in Rhodospirillum centenum (Rhodocista centenaria).